We begin with the raw amino-acid sequence, 293 residues long: Kallikrein-5 (293 aa).

Residues 1–22 form the signal peptide; it reads MATARPPWMWVLCALITALLLG. A compositionally biased stretch (polar residues) spans 37-49; it reads HPSNTVPSGSNQD. Residues 37 to 68 are disordered; it reads HPSNTVPSGSNQDLGAGAGEDARSDDSSSRII. Residues 67–290 enclose the Peptidase S1 domain; the sequence is IINGSDCDMH…FTKWIQETIQ (224 aa). Asn-69 is a glycosylation site (N-linked (GlcNAc...) asparagine). 6 cysteine pairs are disulfide-bonded: Cys-73–Cys-206, Cys-93–Cys-109, Cys-178–Cys-279, Cys-185–Cys-251, Cys-217–Cys-231, and Cys-241–Cys-266. Catalysis depends on charge relay system residues His-108 and Asp-153. N-linked (GlcNAc...) asparagine glycosylation is found at Asn-173 and Asn-208. The active-site Charge relay system is Ser-245. Asn-252 carries an N-linked (GlcNAc...) asparagine glycan.

The protein belongs to the peptidase S1 family. Kallikrein subfamily. Interacts with SPINK9. In terms of tissue distribution, expressed in skin, breast, brain and testis. Expressed at the stratum granulosum of palmar skin.

The protein resides in the secreted. With respect to regulation, inhibited by Zn2+. Its function is as follows. May be involved in desquamation. The sequence is that of Kallikrein-5 from Homo sapiens (Human).